Reading from the N-terminus, the 267-residue chain is Multivesicular body subunit 12A (267 aa).

The region spanning 7-146 (AAPLSGVGWA…SFAIWCKKGA (140 aa)) is the MABP domain. The SH3-binding motif lies at 154 to 159 (PVPKPR). Residues 210-259 (MDGVPFTLHPKFERSPKSDSSAILTDLTVKSLADIEKEYNYTFVVERTAA) form the UMA domain.

This sequence belongs to the MVB12 family. Component of the ESCRT-I complex (endosomal sorting complex required for transport I).

The protein resides in the cytoplasm. It localises to the endosome. The protein localises to the late endosome membrane. Its function is as follows. Component of the ESCRT-I complex, a regulator of vesicular trafficking process. Required for the sorting of endocytic ubiquitinated cargos into multivesicular bodies. The chain is Multivesicular body subunit 12A (MVB12A) from Gallus gallus (Chicken).